Consider the following 308-residue polypeptide: MTLNGGSGASGSRGAGGRERDRRRGSTPWGPAPPLHRRSMPVDERDLQAALAPGSLATTAAGTRTQGQRLDWPEGSSDSLSSGGSGSEEGVYKVLLLGAPGVGKSALARIFGGIEDGPEAEAAGHTYDRSITVDGEEASLLVYDIWEEDGGCWLPGHCMAMGDAYVIVYSITDKGSFEKASELRVQLRRARQTDDVPIILVGNKSDLVRSREVSVDEGRACAVVFDCKFIETSAALHHNVQALFEGVVRQIRLRRDSKEDNARRQAGTRRRESLGKKAKRFLGRIVARNSRKMAFRAKSKSCHDLSVL.

The span at 1-15 shows a compositional bias: gly residues; that stretch reads MTLNGGSGASGSRGA. The tract at residues 1-86 is disordered; that stretch reads MTLNGGSGAS…SDSLSSGGSG (86 aa). Arg-24 carries the post-translational modification Omega-N-methylarginine. Ser-26 bears the Phosphoserine mark. A compositionally biased stretch (low complexity) spans 57–82; the sequence is ATTAAGTRTQGQRLDWPEGSSDSLSS. GTP contacts are provided by residues 98–105 and 203–206; these read GAPGVGKS and NKSD. The segment at 278–297 is calmodulin-binding; that stretch reads AKRFLGRIVARNSRKMAFRA.

The protein belongs to the small GTPase superfamily. RGK family. In terms of assembly, interacts with Calmodulin preferentially in the inactive, GDP-bound form. Interacts with CAMK2D. Interacts with CACNB2; interaction may be involved in beta-adrenergic regulation of heart rate and contractile force. Interaction with CACNB2 regulates the trafficking of CACNA1C to the cell membrane. Post-translationally, phosphorylation at Ser-26, Ser-39, Ser-273 and Ser-301 may be involved in regulating inhibition of voltage-gated L-type Ca(2+) channels.

The protein resides in the cell membrane. May regulate basal voltage-dependent L-type Ca(2+) currents and be required for beta-adrenergic augmentation of Ca(2+) influx in cardiomyocytes, thereby regulating increases in heart rate and contractile force. May play an important role in cardiac antiarrhythmia via the strong suppression of voltage-dependent L-type Ca(2+) currents. Regulates voltage-gated L-type calcium channel subunit alpha-1C trafficking to the cell membrane. Inhibits cardiac hypertrophy through the calmodulin-dependent kinase II (CaMKII) pathway. Inhibits phosphorylation and activation of CAMK2D. The polypeptide is GTP-binding protein RAD (Rrad) (Mus musculus (Mouse)).